A 123-amino-acid chain; its full sequence is Small ribosomal subunit protein uS12 (123 aa).

3-methylthioaspartic acid is present on Asp-89.

It belongs to the universal ribosomal protein uS12 family. As to quaternary structure, part of the 30S ribosomal subunit. Contacts proteins S8 and S17. May interact with IF1 in the 30S initiation complex.

Functionally, with S4 and S5 plays an important role in translational accuracy. In terms of biological role, interacts with and stabilizes bases of the 16S rRNA that are involved in tRNA selection in the A site and with the mRNA backbone. Located at the interface of the 30S and 50S subunits, it traverses the body of the 30S subunit contacting proteins on the other side and probably holding the rRNA structure together. The combined cluster of proteins S8, S12 and S17 appears to hold together the shoulder and platform of the 30S subunit. The chain is Small ribosomal subunit protein uS12 from Beijerinckia indica subsp. indica (strain ATCC 9039 / DSM 1715 / NCIMB 8712).